The following is a 651-amino-acid chain: Tudor domain-containing protein 3 (651 aa).

A disordered region spans residues 147-189; the sequence is TKTFGGGGGGVRSHLNIGAGGHRNREVSQKEKASKSESKNEGV. The segment covering 169–189 has biased composition (basic and acidic residues); sequence RNREVSQKEKASKSESKNEGV. The UBA domain maps to 193–233; the sequence is LVDEKALKHITEMGFSKEASRQALMDNANNLEAALNVLLNS. 3 disordered regions span residues 234 to 272, 306 to 371, and 384 to 459; these read SKQK…APST, TEQN…DVWA, and YDRT…RKSR. Residue serine 256 is modified to Phosphoserine. Residues 321-338 show a composition bias toward basic and acidic residues; that stretch reads PRNDPRQPRNEKPPRFQR. The span at 339-352 shows a compositional bias: polar residues; it reads DTPNLKSALENSVL. Serine 345 bears the Phosphoserine mark. Residue lysine 470 forms a Glycyl lysine isopeptide (Lys-Gly) (interchain with G-Cter in SUMO2) linkage. The region spanning 555–615 is the Tudor domain; the sequence is MWKPGDECFA…KPVQTEAWEE (61 aa). Over residues 624 to 633 the composition is skewed to basic and acidic residues; sequence EFRRGGDGQP. Positions 624-651 are disordered; it reads EFRRGGDGQPRRSTRPTQQFYQPPRARN. The EBM motif; may mediate interaction with the EJC stretch occupies residues 631 to 651; it reads GQPRRSTRPTQQFYQPPRARN.

In terms of assembly, component of mRNA stress granules. Interacts with FMR1, FXR1, FXR2, EWSR1, FUS, SERBP1, EEF1A1 and DDX3X or DDX3Y, and with the small nuclear ribonucleoprotein-associated proteins SNRPB and SNRPN. Interacts with 'Lys-48'-linked tetra-ubiquitin, but not with monoubiquitin or 'Lys-63'-linked ubiquitin chains. May interact with the exon junction complex (EJC) composed at least of CASC3, EIF4A3, MAGOH and RBM8A. Interacts with POLR2A (via the C-terminal domain (CTD)).

The protein localises to the cytoplasm. Its subcellular location is the nucleus. Functionally, scaffolding protein that specifically recognizes and binds dimethylarginine-containing proteins. Plays a role in the regulation of translation of target mRNAs by binding Arg/Gly-rich motifs (GAR) in dimethylarginine-containing proteins. In nucleus, acts as a coactivator: recognizes and binds asymmetric dimethylation on the core histone tails associated with transcriptional activation (H3R17me2a and H4R3me2a) and recruits proteins at these arginine-methylated loci. In cytoplasm, acts as an antiviral factor that participates in the assembly of stress granules together with G3BP1. The protein is Tudor domain-containing protein 3 (Tdrd3) of Rattus norvegicus (Rat).